We begin with the raw amino-acid sequence, 379 residues long: ATPase ASNA1 homolog (379 aa).

The segment at methionine 1–tyrosine 20 is disordered. Low complexity predominate over residues asparagine 7 to aspartate 18. Position 46-53 (lysine 46–threonine 53) interacts with ATP. Aspartate 75 is a catalytic residue. The ATP site is built by glutamate 246 and asparagine 273.

This sequence belongs to the arsA ATPase family. Homodimer.

The protein resides in the cytoplasm. It is found in the endoplasmic reticulum. Its function is as follows. ATPase required for the post-translational delivery of tail-anchored (TA) proteins to the endoplasmic reticulum. Recognizes and selectively binds the transmembrane domain of TA proteins in the cytosol. This complex then targets to the endoplasmic reticulum by membrane-bound receptors, where the tail-anchored protein is released for insertion. This process is regulated by ATP binding and hydrolysis. ATP binding drives the homodimer towards the closed dimer state, facilitating recognition of newly synthesized TA membrane proteins. ATP hydrolysis is required for insertion. Subsequently, the homodimer reverts towards the open dimer state, lowering its affinity for the membrane-bound receptor, and returning it to the cytosol to initiate a new round of targeting. In Plasmodium falciparum (isolate 3D7), this protein is ATPase ASNA1 homolog.